The sequence spans 507 residues: ATP synthase subunit alpha, chloroplastic (507 aa).

170–177 (GDRQTGKT) contributes to the ATP binding site.

The protein belongs to the ATPase alpha/beta chains family. As to quaternary structure, F-type ATPases have 2 components, CF(1) - the catalytic core - and CF(0) - the membrane proton channel. CF(1) has five subunits: alpha(3), beta(3), gamma(1), delta(1), epsilon(1). CF(0) has four main subunits: a, b, b' and c.

The protein resides in the plastid. It localises to the chloroplast thylakoid membrane. It catalyses the reaction ATP + H2O + 4 H(+)(in) = ADP + phosphate + 5 H(+)(out). Its function is as follows. Produces ATP from ADP in the presence of a proton gradient across the membrane. The alpha chain is a regulatory subunit. The chain is ATP synthase subunit alpha, chloroplastic from Amborella trichopoda.